Here is a 115-residue protein sequence, read N- to C-terminus: Holo-[acyl-carrier-protein] synthase (115 aa).

Mg(2+)-binding residues include aspartate 8 and glutamate 50.

Belongs to the P-Pant transferase superfamily. AcpS family. The cofactor is Mg(2+).

Its subcellular location is the cytoplasm. The enzyme catalyses apo-[ACP] + CoA = holo-[ACP] + adenosine 3',5'-bisphosphate + H(+). Its function is as follows. Transfers the 4'-phosphopantetheine moiety from coenzyme A to a Ser of acyl-carrier-protein. In Arthrobacter sp. (strain FB24), this protein is Holo-[acyl-carrier-protein] synthase.